A 361-amino-acid chain; its full sequence is Peptide chain release factor 1 (361 aa).

Gln-236 carries the post-translational modification N5-methylglutamine. Positions 285-309 (TAKDSARAADRKAQVGSGDRSERIR) are enriched in basic and acidic residues. The interval 285–311 (TAKDSARAADRKAQVGSGDRSERIRTY) is disordered.

The protein belongs to the prokaryotic/mitochondrial release factor family. In terms of processing, methylated by PrmC. Methylation increases the termination efficiency of RF1.

It localises to the cytoplasm. Its function is as follows. Peptide chain release factor 1 directs the termination of translation in response to the peptide chain termination codons UAG and UAA. The chain is Peptide chain release factor 1 from Methylorubrum extorquens (strain CM4 / NCIMB 13688) (Methylobacterium extorquens).